Consider the following 451-residue polypeptide: L-seryl-tRNA(Sec) selenium transferase (451 aa).

At lysine 286 the chain carries N6-(pyridoxal phosphate)lysine.

It belongs to the SelA family. The cofactor is pyridoxal 5'-phosphate.

The protein localises to the cytoplasm. The catalysed reaction is L-seryl-tRNA(Sec) + selenophosphate + H(+) = L-selenocysteinyl-tRNA(Sec) + phosphate. It participates in aminoacyl-tRNA biosynthesis; selenocysteinyl-tRNA(Sec) biosynthesis; selenocysteinyl-tRNA(Sec) from L-seryl-tRNA(Sec) (bacterial route): step 1/1. Its function is as follows. Converts seryl-tRNA(Sec) to selenocysteinyl-tRNA(Sec) required for selenoprotein biosynthesis. The polypeptide is L-seryl-tRNA(Sec) selenium transferase (Aliarcobacter butzleri (strain RM4018) (Arcobacter butzleri)).